The primary structure comprises 104 residues: Large ribosomal subunit protein eL30 (104 aa).

It belongs to the eukaryotic ribosomal protein eL30 family.

The sequence is that of Large ribosomal subunit protein eL30 (RPL30) from Leishmania major.